The chain runs to 297 residues: ATP synthase gamma chain (297 aa).

Belongs to the ATPase gamma chain family. In terms of assembly, F-type ATPases have 2 components, CF(1) - the catalytic core - and CF(0) - the membrane proton channel. CF(1) has five subunits: alpha(3), beta(3), gamma(1), delta(1), epsilon(1). CF(0) has three main subunits: a, b and c.

It is found in the cell membrane. Its function is as follows. Produces ATP from ADP in the presence of a proton gradient across the membrane. The gamma chain is believed to be important in regulating ATPase activity and the flow of protons through the CF(0) complex. In Micrococcus luteus (strain ATCC 4698 / DSM 20030 / JCM 1464 / CCM 169 / CCUG 5858 / IAM 1056 / NBRC 3333 / NCIMB 9278 / NCTC 2665 / VKM Ac-2230) (Micrococcus lysodeikticus), this protein is ATP synthase gamma chain.